The chain runs to 83 residues: Acylphosphatase (83 aa).

Residues 1–83 enclose the Acylphosphatase-like domain; it reads MIEGRVQRVG…TGDDWFEVRY (83 aa). Catalysis depends on residues Arg12 and Asn30.

Belongs to the acylphosphatase family.

It catalyses the reaction an acyl phosphate + H2O = a carboxylate + phosphate + H(+). This is Acylphosphatase (acyP) from Synechococcus sp. (strain CC9605).